Reading from the N-terminus, the 1276-residue chain is Probable outer membrane protein pmp6 (1276 aa).

The first 23 residues, 1–23 (MKYSLPWLLTSSALVFSLHPLMA), serve as a signal peptide directing secretion. An Autotransporter domain is found at 981–1276 (DAPSHPGIWI…NANCGTRYSF (296 aa)).

It belongs to the PMP outer membrane protein family.

It is found in the secreted. The protein resides in the cell wall. Its subcellular location is the cell outer membrane. The sequence is that of Probable outer membrane protein pmp6 (pmp6) from Chlamydia pneumoniae (Chlamydophila pneumoniae).